Consider the following 273-residue polypeptide: MHWMELWKAIILGMVEGLTEFAPVSSTGHMIMVDDLWLKSTEFLGKYAANTFKVVIQLGSILAAVVVFKDRFLDLLGVRGRHPGGHPRLNLIHVIIGLLPAGVLGVLFEDYIDEHLFSTKTVLIGLVLGALLMIAADKFAKKAARTQTVDQITYKQAFFVGLMQCLSLWPGFSRSGSTISGGVLVGMSHRAAADFTFIMAVPIMAGASGLSLLKNWQYVTAADIPFFIAGFFSAFVFALLAIRFFLELINRIRLVPFAVYRIVLAVVIYFLYF.

The next 8 membrane-spanning stretches (helical) occupy residues 4–24 (MELW…FAPV), 48–68 (AANT…VVVF), 89–109 (LNLI…VLFE), 116–136 (LFST…MIAA), 152–172 (ITYK…WPGF), 193–213 (ADFT…LSLL), 222–242 (ADIP…LLAI), and 252–272 (IRLV…YFLY).

The protein belongs to the UppP family.

The protein resides in the cell membrane. It carries out the reaction di-trans,octa-cis-undecaprenyl diphosphate + H2O = di-trans,octa-cis-undecaprenyl phosphate + phosphate + H(+). In terms of biological role, catalyzes the dephosphorylation of undecaprenyl diphosphate (UPP). Confers resistance to bacitracin. In Geobacillus kaustophilus (strain HTA426), this protein is Undecaprenyl-diphosphatase.